The primary structure comprises 289 residues: Caffeoylpyruvate hydrolase (289 aa).

3 residues coordinate a divalent metal cation: Glu140, Glu142, and Asp171.

The protein belongs to the FAH family. Homodimer. Mg(2+) serves as cofactor. It depends on Mn(2+) as a cofactor.

It catalyses the reaction (E)-caffeoylpyruvate + H2O = (E)-caffeate + pyruvate + H(+). It functions in the pathway secondary metabolite biosynthesis. Functionally, caffeoylpyruvate hydrolase; part of the gene cluster that mediates the fungal bioluminescence cycle. Involved in the recycling of oxyluciferin, a pyruvic acid adduct of caffeic acid, to caffeic acid. The fungal bioluminescence cycle begins with the hispidin synthetase that catalyzes the formation of hispidin which is further hydroxylated by the hispidin-3-hydroxylase, yielding the fungal luciferin 3-hydroxyhispidin. The luciferase then produces an endoperoxide as a high-energy intermediate with decomposition that yields oxyluciferin (also known as caffeoylpyruvate) and light emission. Oxyluciferin can be recycled to caffeic acid by caffeoylpyruvate hydrolase. This Neonothopanus nambi (Agaricus nambi) protein is Caffeoylpyruvate hydrolase.